A 926-amino-acid chain; its full sequence is Eukaryotic translation initiation factor 3 subunit C (926 aa).

2 disordered regions span residues 1–36 (MSRF…KQPI) and 158–309 (AYKQ…KVKG). The segment covering 8 to 21 (GSDSESESSLSGDE) has biased composition (low complexity). Residues 165–189 (ESADEDQEKDEDSEASSSSDDDSDE) are compositionally biased toward acidic residues. The span at 207-216 (SRSKFLKKEE) shows a compositional bias: basic and acidic residues. A compositionally biased stretch (acidic residues) spans 217 to 243 (AEDEAESSEDEDWGSDSDESDSDESDD). Basic and acidic residues predominate over residues 258–275 (TVTEGDRQAVEKKKEDKA). The segment covering 289-302 (EGEEGEEDDNEGGG) has biased composition (acidic residues). The PCI domain maps to 675–851 (FHMHINLELL…QTVVMHGTEP (177 aa)). A disordered region spans residues 880-926 (QGSYGGYFNRGDRGDRGDRDQKDQYQRKEGGYMRRGYRRDQQGQSNY). Basic and acidic residues predominate over residues 889 to 911 (RGDRGDRGDRDQKDQYQRKEGGY).

This sequence belongs to the eIF-3 subunit C family. Component of the eukaryotic translation initiation factor 3 (eIF-3) complex, which is composed of 13 subunits: eif3a, eif3b, eif3c, eif3d, eif3e, eif3f, eif3g, eif3h, eif3i, eif3j, eif3k, eif3l and eif3m.

It localises to the cytoplasm. In terms of biological role, component of the eukaryotic translation initiation factor 3 (eIF-3) complex, which is involved in protein synthesis of a specialized repertoire of mRNAs and, together with other initiation factors, stimulates binding of mRNA and methionyl-tRNAi to the 40S ribosome. The eIF-3 complex specifically targets and initiates translation of a subset of mRNAs involved in cell proliferation. The chain is Eukaryotic translation initiation factor 3 subunit C (eif3c) from Xenopus laevis (African clawed frog).